The sequence spans 213 residues: Pyridoxine/pyridoxamine 5'-phosphate oxidase (213 aa).

FMN contacts are provided by residues 60–65 (RMVLMK), 75–76 (YS), Lys82, and Gln104. Lys65 provides a ligand contact to substrate. The substrate site is built by Tyr122 and Arg126. FMN contacts are provided by residues 139 to 140 (QS) and Trp184. 190–192 (RLH) is a substrate binding site. Residue Arg194 coordinates FMN.

This sequence belongs to the pyridoxamine 5'-phosphate oxidase family. In terms of assembly, homodimer. The cofactor is FMN.

The enzyme catalyses pyridoxamine 5'-phosphate + O2 + H2O = pyridoxal 5'-phosphate + H2O2 + NH4(+). The catalysed reaction is pyridoxine 5'-phosphate + O2 = pyridoxal 5'-phosphate + H2O2. The protein operates within cofactor metabolism; pyridoxal 5'-phosphate salvage; pyridoxal 5'-phosphate from pyridoxamine 5'-phosphate: step 1/1. Its pathway is cofactor metabolism; pyridoxal 5'-phosphate salvage; pyridoxal 5'-phosphate from pyridoxine 5'-phosphate: step 1/1. Catalyzes the oxidation of either pyridoxine 5'-phosphate (PNP) or pyridoxamine 5'-phosphate (PMP) into pyridoxal 5'-phosphate (PLP). This Nitrobacter winogradskyi (strain ATCC 25391 / DSM 10237 / CIP 104748 / NCIMB 11846 / Nb-255) protein is Pyridoxine/pyridoxamine 5'-phosphate oxidase.